A 929-amino-acid chain; its full sequence is Type I restriction enzyme SauCOLORF180P endonuclease subunit (929 aa).

A Helicase ATP-binding domain is found at 254–418 (QQATETGNNG…DGRTTADIFG (165 aa)). An ATP-binding site is contributed by 268 to 274 (TTGSGKT).

The protein belongs to the HsdR family. The type I restriction/modification system is composed of three polypeptides R, M and S.

The catalysed reaction is Endonucleolytic cleavage of DNA to give random double-stranded fragments with terminal 5'-phosphates, ATP is simultaneously hydrolyzed.. Its function is as follows. The restriction (R) subunit of a type I restriction enzyme that recognizes an undetermined sequence and cleaves a random distance away. Subunit R is required for both nuclease and ATPase activities, but not for modification. After locating a non-methylated recognition site, the enzyme complex serves as a molecular motor that translocates DNA in an ATP-dependent manner until a collision occurs that triggers cleavage. The polypeptide is Type I restriction enzyme SauCOLORF180P endonuclease subunit (Staphylococcus aureus (strain COL)).